Here is a 427-residue protein sequence, read N- to C-terminus: Probable fatty acid methyltransferase Rv3720 (427 aa).

S-adenosyl-L-methionine contacts are provided by residues 167–168 (YT), 202–210 (LLDVGCGWG), and 227–232 (TLSAEQ).

The protein belongs to the CFA/CMAS family.

Functionally, may be a S-adenosylmethionine-dependent methyltransferase involved in fatty acid metabolism. The protein is Probable fatty acid methyltransferase Rv3720 of Mycobacterium tuberculosis (strain ATCC 25618 / H37Rv).